The following is a 586-amino-acid chain: MKENETLKQIVLKTLEESVNSLISSFPEVEKEAFKIKIEYSRDEKFGDYSTSFALENSKLLKRNPIQVSKELVEILQKRTDLFEKVDFTPPGFVNFRISTSFLLNYIETSVLSGNYFPKVDLPLKINLEFVSANPTGPLNIVSARAAANGDTMASLLKAIGHNVDKEFYINDYGNQVFLLGVSTLVRIRELKGEEGTQQETTDDTPIEIILEKNILPAEGYRGEYIKDIASSLLKDPKKNVTIENLLKQKKYKELAELCAVWTIENNLIWQRKDLDAFGVEFDCYFSERTLHEADKVLSVMKDLEKSGKIFQEDGKKVFRSTEYGDDKDRVVVRDDGRPTYLLADIAYHKDKIERGYDKIYDIWGPDHHGYISRLSGAVQSLGYKKENFKVIISQQVNLLESGQKVKMSKRAGSFQTMSDLIGFLGKHGKDVGRYFFVMRSLDAPLDFDLDLAKDESDKNPVFYLQYAHARICSIFKEVGDQTSKEAAAILEMSEERKRLLFWIARFPEEIFDSANAMEPHRVTNYLQSFAKAFTSFYLAKDNRLKDASKEVRLGLARICLAAKNVLAEGLKLIGVSAPERMEKEN.

Residues A133–S143 carry the 'HIGH' region motif.

The protein belongs to the class-I aminoacyl-tRNA synthetase family. Monomer.

Its subcellular location is the cytoplasm. The enzyme catalyses tRNA(Arg) + L-arginine + ATP = L-arginyl-tRNA(Arg) + AMP + diphosphate. The sequence is that of Arginine--tRNA ligase from Leptospira interrogans serogroup Icterohaemorrhagiae serovar copenhageni (strain Fiocruz L1-130).